A 732-amino-acid polypeptide reads, in one-letter code: Ionotropic receptor 40a (732 aa).

The signal sequence occupies residues 1-19; the sequence is MHKFLALGLLPYLLGLLNS. Asn-18, Asn-235, and Asn-299 each carry an N-linked (GlcNAc...) asparagine glycan. Residues 20–369 lie on the Extracellular side of the membrane; it reads TRLTFIGNDE…RPFKQDIWPH (350 aa). A helical transmembrane segment spans residues 370–390; it reads LILTIIFSGPIFYGIIALPYI. Topologically, residues 391-465 are cytoplasmic; that stretch reads WRRRWANSDV…NELHNGYRAK (75 aa). The chain crosses the membrane as a helical span at residues 466 to 486; that stretch reads FLTIVYWIAATYVLADVYSAQ. At 487–688 the chain is on the extracellular side; sequence LTSQFARPAR…LNLRMLQGAF (202 aa). Asn-531 carries N-linked (GlcNAc...) asparagine glycosylation. Residues 689–709 form a helical membrane-spanning segment; sequence IALGVGSLAAGVILLLEIVFI. The Cytoplasmic portion of the chain corresponds to 710–732; that stretch reads KLDQARLWMLCSRLQWIRYDRKV.

This sequence belongs to the glutamate-gated ion channel (TC 1.A.10.1) family. As to expression, in the antenna, detected in sacculus neurons which innervate the first and second chambers (at protein level).

It localises to the cell membrane. In terms of biological role, integral part of a neural sensory system in the antenna that provides the neural basis for the response to environmental changes in humidity (hygrosensation). Together with Ir25a and Ir93a, mediates the response of the hygrosensory sacculus neurons to changes in relative humidity and is required for dry detection behavior. This chain is Ionotropic receptor 40a, found in Drosophila melanogaster (Fruit fly).